Reading from the N-terminus, the 277-residue chain is MAVRKSNPLTPARRGMSFSDFAEITRATPHKSLLSKLSKTGGRNNHGRITARHIGGGHKRRYRLVDFRRSDKDGVKAKVAHIEYDPNRTARIALLHFLDGAKRYILAPSGLKQGDVVESGSSADIRPGNSLCIRDIPVGTILHAVELRPGQGAKLARSAGSSVRLSAKDGDFAILKLPSGEIRMVSLSCRATIGEVGNGQRLNVSLGKAGRSRWCGVRPSVRGVAMNPVDHPHGGGEGKTSGGRHPVSPWGRPEGKTRRANKPSDRFIIRRKSRKRR.

Positions 225–277 are disordered; it reads AMNPVDHPHGGGEGKTSGGRHPVSPWGRPEGKTRRANKPSDRFIIRRKSRKRR. A compositionally biased stretch (basic and acidic residues) spans 253–268; it reads PEGKTRRANKPSDRFI.

Belongs to the universal ribosomal protein uL2 family. Part of the 50S ribosomal subunit. Forms a bridge to the 30S subunit in the 70S ribosome.

One of the primary rRNA binding proteins. Required for association of the 30S and 50S subunits to form the 70S ribosome, for tRNA binding and peptide bond formation. It has been suggested to have peptidyltransferase activity; this is somewhat controversial. Makes several contacts with the 16S rRNA in the 70S ribosome. The sequence is that of Large ribosomal subunit protein uL2 from Tropheryma whipplei (strain TW08/27) (Whipple's bacillus).